Consider the following 128-residue polypeptide: Nucleoside diphosphate kinase B (128 aa).

At Met1 the chain carries N-acetylmethionine. ATP-binding residues include Lys9, Phe39, Thr70, Arg81, and Asn91. The active-site Pros-phosphohistidine intermediate is the His94.

This sequence belongs to the NDK family. Requires Mg(2+) as cofactor.

The protein resides in the cytoplasm. The protein localises to the nucleus. It is found in the cell projection. It localises to the lamellipodium. Its subcellular location is the ruffle. The enzyme catalyses a 2'-deoxyribonucleoside 5'-diphosphate + ATP = a 2'-deoxyribonucleoside 5'-triphosphate + ADP. It carries out the reaction a ribonucleoside 5'-diphosphate + ATP = a ribonucleoside 5'-triphosphate + ADP. Functionally, major role in the synthesis of nucleoside triphosphates other than ATP. The chain is Nucleoside diphosphate kinase B (nme2) from Merluccius australis australis (Austral hake).